Here is a 932-residue protein sequence, read N- to C-terminus: DNA mismatch repair protein MutS (932 aa).

The segment covering 1–13 (MTTDTDTDVDAGT) has biased composition (acidic residues). Residues 1-26 (MTTDTDTDVDAGTDLEPQPEGPPEKM) form a disordered region. Residue 648–655 (GPNMSGKS) coordinates ATP. The disordered stretch occupies residues 865-892 (NQQNQASDDDEIARSPRGADTNTDAGIN).

Belongs to the DNA mismatch repair MutS family.

Its function is as follows. This protein is involved in the repair of mismatches in DNA. It is possible that it carries out the mismatch recognition step. This protein has a weak ATPase activity. The polypeptide is DNA mismatch repair protein MutS (Haloquadratum walsbyi (strain DSM 16790 / HBSQ001)).